The primary structure comprises 88 residues: Large ribosomal subunit protein bL27 (88 aa).

This sequence belongs to the bacterial ribosomal protein bL27 family.

The polypeptide is Large ribosomal subunit protein bL27 (Mycobacterium leprae (strain TN)).